Here is a 634-residue protein sequence, read N- to C-terminus: tRNA uridine 5-carboxymethylaminomethyl modification enzyme MnmG (634 aa).

14–19 (GGGHAG) contributes to the FAD binding site. 279–293 (GPRYCPSIEDKVVRF) contacts NAD(+).

It belongs to the MnmG family. Homodimer. Heterotetramer of two MnmE and two MnmG subunits. It depends on FAD as a cofactor.

Its subcellular location is the cytoplasm. In terms of biological role, NAD-binding protein involved in the addition of a carboxymethylaminomethyl (cmnm) group at the wobble position (U34) of certain tRNAs, forming tRNA-cmnm(5)s(2)U34. The chain is tRNA uridine 5-carboxymethylaminomethyl modification enzyme MnmG from Xanthomonas campestris pv. campestris (strain 8004).